The following is a 287-amino-acid chain: Ethylene-responsive transcription factor ERF116 (287 aa).

The AP2/ERF DNA-binding region spans 80-140 (YPVGVRPRPS…ASSGSAVSSS (61 aa)).

The protein belongs to the AP2/ERF transcription factor family. ERF subfamily.

The protein localises to the nucleus. Probably acts as a transcriptional activator. Binds to the GCC-box pathogenesis-related promoter element. May be involved in the regulation of gene expression by stress factors and by components of stress signal transduction pathways. The sequence is that of Ethylene-responsive transcription factor ERF116 (ERF116) from Arabidopsis thaliana (Mouse-ear cress).